A 188-amino-acid chain; its full sequence is Elongation factor P (188 aa).

Belongs to the elongation factor P family.

It localises to the cytoplasm. The protein operates within protein biosynthesis; polypeptide chain elongation. In terms of biological role, involved in peptide bond synthesis. Stimulates efficient translation and peptide-bond synthesis on native or reconstituted 70S ribosomes in vitro. Probably functions indirectly by altering the affinity of the ribosome for aminoacyl-tRNA, thus increasing their reactivity as acceptors for peptidyl transferase. This is Elongation factor P from Sulfurovum sp. (strain NBC37-1).